Consider the following 75-residue polypeptide: Veswaprin-c (75 aa).

The N-terminal stretch at 1 to 24 (MSSGGLLLLLGLLTLWAELTPVSS) is a signal peptide. The 46-residue stretch at 27–72 (RPKKPGLCPPRPQKPPCVRECKNDWRCPGERKCCRYGCIYECRDPI) folds into the WAP domain. 4 disulfide bridges follow: C34/C60, C43/C64, C47/C59, and C53/C68.

The protein belongs to the venom waprin family. As to expression, expressed by the venom gland.

It is found in the secreted. Its function is as follows. Damages membranes of susceptible bacteria. Has no hemolytic activity. Not toxic to mice. Does not inhibit the proteinases elastase and cathepsin G. This chain is Veswaprin-c, found in Demansia vestigiata (Lesser black whip snake).